Here is a 512-residue protein sequence, read N- to C-terminus: Endo-1,4-beta-xylanase A (512 aa).

An N-terminal signal peptide occupies residues 1 to 30; sequence MKRKVKKMAAMATSIIMAIMIILHSIPVLA. One can recognise a GH11 domain in the interval 33-228; that stretch reads IIYDNETGTH…SSGYANVYKN (196 aa). Glu-124 functions as the Nucleophile in the catalytic mechanism. Glu-215 (proton donor) is an active-site residue. 2 CBM6 domains span residues 251 to 371 and 388 to 508; these read SIIE…FIFS and SIIQ…FVFS. The Ca(2+) site is built by Glu-254 and Glu-256. Thr-271 lines the D-xylotriose pocket. Residue Arg-276 participates in Ca(2+) binding. Repeat 1 spans residues 279 to 340; that stretch reads GYIENGNTVT…SSTGSWNTYQ (62 aa). Residues 279–477 form a 2 X 61 AA approximate repeats region; the sequence is GYIENGNTVT…GSTGSFDTYR (199 aa). Residues Tyr-280, Asn-337, and Asn-364 each contribute to the D-xylotriose site. Residues Tyr-280, Asn-337, and Asn-364 each contribute to the D-xylobiose site. Asp-366, Gln-391, Glu-393, and Ser-413 together coordinate Ca(2+). Repeat unit 2 spans residues 416–477; it reads GYIENGYSTT…GSTGSFDTYR (62 aa). Positions 417, 474, and 501 each coordinate D-xylotriose. Ca(2+) is bound at residue Asp-503.

This sequence belongs to the glycosyl hydrolase 11 (cellulase G) family.

The enzyme catalyses Endohydrolysis of (1-&gt;4)-beta-D-xylosidic linkages in xylans.. The protein operates within glycan degradation; xylan degradation. The protein is Endo-1,4-beta-xylanase A (xynA) of Thermoclostridium stercorarium (Clostridium stercorarium).